Consider the following 91-residue polypeptide: MAKGQSLQDPFLNALRRERVPVSIYLVNGIKLQGQVESFDQFVILLKNTVSQMVYKHAISTVVPSRPFNVGSHQGGSSNYNAQQDDSAGEQ.

The 60-residue stretch at Asp-9–Phe-68 folds into the Sm domain. The disordered stretch occupies residues Arg-66 to Gln-91. Polar residues predominate over residues Gly-71–Gln-91.

The protein belongs to the Hfq family. Homohexamer.

In terms of biological role, RNA chaperone that binds small regulatory RNA (sRNAs) and mRNAs to facilitate mRNA translational regulation in response to envelope stress, environmental stress and changes in metabolite concentrations. Also binds with high specificity to tRNAs. In Shewanella amazonensis (strain ATCC BAA-1098 / SB2B), this protein is RNA-binding protein Hfq.